We begin with the raw amino-acid sequence, 362 residues long: Anthranilate phosphoribosyltransferase (362 aa).

5-phospho-alpha-D-ribose 1-diphosphate contacts are provided by residues Gly-96, 99-100 (GD), Thr-104, 106-109 (NIST), 124-132 (KHGNRAASS), and Gly-136. Gly-96 lines the anthranilate pocket. Ser-108 contributes to the Mg(2+) binding site. Position 127 (Asn-127) interacts with anthranilate. Anthranilate is bound at residue Arg-182. Mg(2+) is bound by residues Asp-240 and Glu-241.

The protein belongs to the anthranilate phosphoribosyltransferase family. In terms of assembly, homodimer. It depends on Mg(2+) as a cofactor.

The enzyme catalyses N-(5-phospho-beta-D-ribosyl)anthranilate + diphosphate = 5-phospho-alpha-D-ribose 1-diphosphate + anthranilate. The protein operates within amino-acid biosynthesis; L-tryptophan biosynthesis; L-tryptophan from chorismate: step 2/5. Its function is as follows. Catalyzes the transfer of the phosphoribosyl group of 5-phosphorylribose-1-pyrophosphate (PRPP) to anthranilate to yield N-(5'-phosphoribosyl)-anthranilate (PRA). This Rhodococcus opacus (strain B4) protein is Anthranilate phosphoribosyltransferase.